Here is a 559-residue protein sequence, read N- to C-terminus: Glucose-6-phosphate isomerase (559 aa).

E352 functions as the Proton donor in the catalytic mechanism. Catalysis depends on residues H383 and K511.

It belongs to the GPI family.

Its subcellular location is the cytoplasm. The enzyme catalyses alpha-D-glucose 6-phosphate = beta-D-fructose 6-phosphate. Its pathway is carbohydrate biosynthesis; gluconeogenesis. It functions in the pathway carbohydrate degradation; glycolysis; D-glyceraldehyde 3-phosphate and glycerone phosphate from D-glucose: step 2/4. Catalyzes the reversible isomerization of glucose-6-phosphate to fructose-6-phosphate. This is Glucose-6-phosphate isomerase from Chlorobium phaeobacteroides (strain DSM 266 / SMG 266 / 2430).